A 429-amino-acid chain; its full sequence is Ribosomal RNA small subunit methyltransferase B (429 aa).

Residues cysteine 254–lysine 260, aspartate 277, aspartate 303, and aspartate 322 each bind S-adenosyl-L-methionine. The active-site Nucleophile is cysteine 375.

This sequence belongs to the class I-like SAM-binding methyltransferase superfamily. RsmB/NOP family.

It is found in the cytoplasm. It carries out the reaction cytidine(967) in 16S rRNA + S-adenosyl-L-methionine = 5-methylcytidine(967) in 16S rRNA + S-adenosyl-L-homocysteine + H(+). Specifically methylates the cytosine at position 967 (m5C967) of 16S rRNA. The chain is Ribosomal RNA small subunit methyltransferase B from Escherichia coli O7:K1 (strain IAI39 / ExPEC).